The sequence spans 708 residues: E3 ubiquitin-protein ligase Praja-2 (708 aa).

The span at Met1–Ala10 shows a compositional bias: basic and acidic residues. Disordered stretches follow at residues Met1–Thr30 and Glu53–Pro90. Ser2 is modified (N-acetylserine). Positions Glu74–Pro90 are enriched in polar residues. The residue at position 196 (Ser196) is a Phosphoserine. 3 disordered regions span residues Gly244 to Ser342, Thr385 to Phe411, and Asp425 to Leu495. Phosphothreonine is present on Thr246. Positions Val249–Glu276 are enriched in polar residues. 3 positions are modified to phosphoserine: Ser253, Ser309, and Ser323. The span at Ile322–Gly332 shows a compositional bias: polar residues. Positions Phe333 to Ser342 are enriched in basic and acidic residues. The residue at position 342 (Ser342) is a Phosphoserine; by PKA. Position 389 is a phosphothreonine; by PKA (Thr389). Ser432 carries the post-translational modification Phosphoserine. Acidic residues predominate over residues Asn467 to Gln483. Residues Glu484–Thr493 are compositionally biased toward polar residues. Residues Asp531–Pro708 form an interaction with PRKAR1A, PRKAR2A and PRKAR2B region. The segment at Trp550–Asp570 is mediates interaction with TBC1D31. The RING-type; atypical zinc finger occupies Cys634–Arg675. A disordered region spans residues Ala685–Pro708. Residues Pro699–Pro708 show a composition bias toward low complexity.

Binds ubiquitin-conjugating enzymes (E2s). In vitro, interacts with the ubiquitin-conjugating enzyme, UBE2D2. The phosphorylated form interacts with PRKAR1A, PRKAR2A and PRKAR2B. Binds the catalytic subunits of cAMP-dependent protein kinase. Interacts with MFHAS1. Interacts with TBC1D31; the interaction is direct and recruits PJA2 to centrosomes.

The protein resides in the cytoplasm. It localises to the cell membrane. It is found in the endoplasmic reticulum membrane. The protein localises to the golgi apparatus membrane. Its subcellular location is the synapse. The protein resides in the postsynaptic density. It localises to the cytoskeleton. It is found in the microtubule organizing center. The protein localises to the centrosome. The enzyme catalyses S-ubiquitinyl-[E2 ubiquitin-conjugating enzyme]-L-cysteine + [acceptor protein]-L-lysine = [E2 ubiquitin-conjugating enzyme]-L-cysteine + N(6)-ubiquitinyl-[acceptor protein]-L-lysine.. Its pathway is protein modification; protein ubiquitination. Has E2-dependent E3 ubiquitin-protein ligase activity. Responsible for ubiquitination of cAMP-dependent protein kinase type I and type II-alpha/beta regulatory subunits and for targeting them for proteasomal degradation. Essential for PKA-mediated long-term memory processes. Through the ubiquitination of MFHAS1, positively regulates the TLR2 signaling pathway that leads to the activation of the downstream p38 and JNK MAP kinases and promotes the polarization of macrophages toward the pro-inflammatory M1 phenotype. Plays a role in ciliogenesis by ubiquitinating OFD1. The sequence is that of E3 ubiquitin-protein ligase Praja-2 (PJA2) from Pongo abelii (Sumatran orangutan).